The sequence spans 119 residues: Large ribosomal subunit protein uL18 (119 aa).

It belongs to the universal ribosomal protein uL18 family. As to quaternary structure, part of the 50S ribosomal subunit; part of the 5S rRNA/L5/L18/L25 subcomplex. Contacts the 5S and 23S rRNAs.

Functionally, this is one of the proteins that bind and probably mediate the attachment of the 5S RNA into the large ribosomal subunit, where it forms part of the central protuberance. The protein is Large ribosomal subunit protein uL18 of Cereibacter sphaeroides (strain ATCC 17025 / ATH 2.4.3) (Rhodobacter sphaeroides).